The primary structure comprises 125 residues: Steroid Delta-isomerase (125 aa).

Y14 acts as the Proton donor in catalysis. D38 functions as the Proton acceptor in the catalytic mechanism. D99 provides a ligand contact to substrate.

In terms of assembly, homodimer.

The enzyme catalyses a 3-oxo-Delta(5)-steroid = a 3-oxo-Delta(4)-steroid. This is Steroid Delta-isomerase (ksi) from Comamonas testosteroni (Pseudomonas testosteroni).